A 357-amino-acid chain; its full sequence is F-box only protein 25 (357 aa).

The interaction with beta-actin stretch occupies residues 1–83 (MPFLGQDWRS…DTAAHSFYRE (83 aa)). The region spanning 225-273 (LTLSDLPLHMLNNILYRFSDGWDIVTLGQVTPTLYMLSEDRRLWKRLCQ) is the F-box domain.

As to quaternary structure, part of a SCF (SKP1-cullin-F-box) protein ligase complex consisting of FBXO25, SKP1, CUL1 and RBX1. Interacts directly with SKP1 and CUL1. Interacts (via C-terminus) with beta-actin (via N-terminus). Expressed in all tissues tested, except striated muscle (at protein level). Expressed predominantly in the cerebral cortex, the hippocampus and the Purkinje cell layer of the brain. Intestine and kidney show also significant levels.

The protein localises to the nucleus. It participates in protein modification; protein ubiquitination. In terms of biological role, substrate-recognition component of the SCF (SKP1-CUL1-F-box protein)-type E3 ubiquitin ligase complex. May play a role in accumulation of expanded polyglutamine (polyQ) protein huntingtin (HTT). The chain is F-box only protein 25 (Fbxo25) from Mus musculus (Mouse).